The chain runs to 235 residues: Ribonuclease PH (235 aa).

Residues Arg86 and 124 to 126 (GTR) contribute to the phosphate site.

Belongs to the RNase PH family. Homohexameric ring arranged as a trimer of dimers.

The catalysed reaction is tRNA(n+1) + phosphate = tRNA(n) + a ribonucleoside 5'-diphosphate. Phosphorolytic 3'-5' exoribonuclease that plays an important role in tRNA 3'-end maturation. Removes nucleotide residues following the 3'-CCA terminus of tRNAs; can also add nucleotides to the ends of RNA molecules by using nucleoside diphosphates as substrates, but this may not be physiologically important. Probably plays a role in initiation of 16S rRNA degradation (leading to ribosome degradation) during starvation. The polypeptide is Ribonuclease PH (Francisella tularensis subsp. tularensis (strain FSC 198)).